Consider the following 800-residue polypeptide: Small ribosomal subunit protein uS3c (800 aa).

Residues 1–118 (MGQKVHPSGF…LQVKKDILVK (118 aa)) are S3-like 1st part. The intervening sequence (IVS) stretch occupies residues 119–664 (LQKTRQYLTN…FLDCKFEELE (546 aa)). The tract at residues 665 to 800 (RRKTMWVQNL…TKLVTESTGA (136 aa)) is S3-like 2nd part.

The protein belongs to the universal ribosomal protein uS3 family. In terms of assembly, part of the 30S ribosomal subunit.

The protein localises to the plastid. It is found in the chloroplast. This chain is Small ribosomal subunit protein uS3c (rps3), found in Chlamydomonas moewusii (Chlamydomonas eugametos).